A 356-amino-acid polypeptide reads, in one-letter code: Protein-glutamate methylesterase/protein-glutamine glutaminase (356 aa).

The region spanning 4-121 is the Response regulatory domain; it reads KVLIVDDSAL…QSGMLEYTDL (118 aa). D55 is modified (4-aspartylphosphate). The 194-residue stretch at 156-349 folds into the CheB-type methylesterase domain; that stretch reads PLTSSEKLII…RRVLEFFAAH (194 aa). Residues S169, H195, and D291 contribute to the active site.

It belongs to the CheB family. Phosphorylated by CheA. Phosphorylation of the N-terminal regulatory domain activates the methylesterase activity.

The protein resides in the cytoplasm. The catalysed reaction is [protein]-L-glutamate 5-O-methyl ester + H2O = L-glutamyl-[protein] + methanol + H(+). It catalyses the reaction L-glutaminyl-[protein] + H2O = L-glutamyl-[protein] + NH4(+). In terms of biological role, involved in chemotaxis. Part of a chemotaxis signal transduction system that modulates chemotaxis in response to various stimuli. Catalyzes the demethylation of specific methylglutamate residues introduced into the chemoreceptors (methyl-accepting chemotaxis proteins or MCP) by CheR. Also mediates the irreversible deamidation of specific glutamine residues to glutamic acid. This is Protein-glutamate methylesterase/protein-glutamine glutaminase from Thiobacillus denitrificans (strain ATCC 25259 / T1).